A 276-amino-acid chain; its full sequence is NH(3)-dependent NAD(+) synthetase (276 aa).

43–50 (GISGGVDS) is an ATP binding site. Residue Asp49 participates in Mg(2+) binding. Arg146 contributes to the deamido-NAD(+) binding site. Thr166 contributes to the ATP binding site. Glu171 contributes to the Mg(2+) binding site. Deamido-NAD(+)-binding residues include Lys179 and Asp186. ATP-binding residues include Lys195 and Thr217. 266–267 (HK) provides a ligand contact to deamido-NAD(+).

It belongs to the NAD synthetase family. As to quaternary structure, homodimer.

It catalyses the reaction deamido-NAD(+) + NH4(+) + ATP = AMP + diphosphate + NAD(+) + H(+). It participates in cofactor biosynthesis; NAD(+) biosynthesis; NAD(+) from deamido-NAD(+) (ammonia route): step 1/1. In terms of biological role, catalyzes the ATP-dependent amidation of deamido-NAD to form NAD. Uses ammonia as a nitrogen source. This is NH(3)-dependent NAD(+) synthetase from Shewanella putrefaciens (strain CN-32 / ATCC BAA-453).